Consider the following 308-residue polypeptide: Snake venom metalloprotease inhibitor 02D01 (308 aa).

The signal sequence occupies residues 1-23 (MFVSRLAASGLLLLSLLALSLDG). Residues 24–38 (KPLPQRQPHHIQPME) constitute a propeptide that is removed on maturation. The residue at position 39 (Gln-39) is a Pyrrolidone carboxylic acid. Positions 42-50 (LAPDAPPLE) are excised as a propeptide. Gln-51 is subject to Pyrrolidone carboxylic acid. Positions 54-62 (LAPDAPPLE) are excised as a propeptide. Gln-63 is subject to Pyrrolidone carboxylic acid. A propeptide spanning residues 66–74 (LAPAAPPLE) is cleaved from the precursor. A Pyrrolidone carboxylic acid modification is found at Gln-75. A propeptide spanning residues 78–86 (LAPDAPPME) is cleaved from the precursor. Pyrrolidone carboxylic acid is present on Gln-87. The propeptide occupies 90-98 (LAPDAPPME). Pyrrolidone carboxylic acid is present on Gln-99. Residues 102–110 (LAPDAPPME) constitute a propeptide that is removed on maturation. Position 111 is a pyrrolidone carboxylic acid (Gln-111). A propeptide spanning residues 114-122 (LAPDAPPME) is cleaved from the precursor. The residue at position 123 (Gln-123) is a Pyrrolidone carboxylic acid. A propeptide spanning residues 126 to 134 (LAPDAAPLE) is cleaved from the precursor. Gln-135 is modified (pyrrolidone carboxylic acid). Positions 138–146 (LAPDAPPME) are excised as a propeptide. Gln-147 bears the Pyrrolidone carboxylic acid mark. A propeptide spanning residues 150–158 (LAPDAPPME) is cleaved from the precursor. Pyrrolidone carboxylic acid is present on Gln-159. Positions 162–249 (QPQIPSLMEQ…KQASQKWGRL (88 aa)) are excised as a propeptide. The span at 172–182 (RQLSSGGTTAL) shows a compositional bias: polar residues. Disordered stretches follow at residues 172-228 (RQLS…AAAT) and 252-279 (HDHD…GARR). Residues 198–209 (VVGGGGGGGGGS) are compositionally biased toward gly residues. A compositionally biased stretch (low complexity) spans 210 to 227 (KAALALPKPPKAKGAAAA). Residues 265 to 277 (SVGGGGGGGGGGA) are compositionally biased toward gly residues. The propeptide occupies 278-286 (RRLKGLAKK). Cys-292 and Cys-308 are joined by a disulfide.

It in the C-terminal section; belongs to the natriuretic peptide family. In the central section; belongs to the pHpG family. Expressed by the venom gland.

Its subcellular location is the secreted. In terms of biological role, pEKW and poly-His-poly-Gly peptides may serve as metalloproteinase inhibitors during glandular storage. Their inhibition may be instantly disengaged, by dilution or physiochemical change, when venom is injected into tissue of the prey. Has a vasorelaxant activity in rat aortic strips and a diuretic potency in anesthetized rats. May act by activating natriuretic receptors (NPR1 and/or NPR2). The chain is Snake venom metalloprotease inhibitor 02D01 from Echis ocellatus (Ocellated saw-scaled viper).